A 100-amino-acid chain; its full sequence is Protein RADIALIS-like 1 (100 aa).

The region spanning 9 to 64 (QSSGSWTAKQNKAFEQALATYDQDTPNRWQNVAKVVGGKTTEEVKRHYELLVQDIN) is the SANT domain. The disordered stretch occupies residues 73–100 (FPNYRTSGGCTNGRLSQEEKRMRNMRLQ). A compositionally biased stretch (polar residues) spans 76 to 87 (YRTSGGCTNGRL).

It is found in the nucleus. Its function is as follows. Probable transcription factor. The chain is Protein RADIALIS-like 1 (RL1) from Arabidopsis thaliana (Mouse-ear cress).